Here is a 471-residue protein sequence, read N- to C-terminus: tRNA-2-methylthio-N(6)-dimethylallyladenosine synthase (471 aa).

Residues 31 to 149 (LYYHIETYGC…FPQLLWEALN (119 aa)) enclose the MTTase N-terminal domain. [4Fe-4S] cluster is bound by residues Cys-40, Cys-76, Cys-110, Cys-186, Cys-190, and Cys-193. The Radical SAM core domain maps to 172 to 402 (RDSNLKAWVN…IELQNKISLE (231 aa)). The TRAM domain occupies 405 to 468 (AELRGKIVEV…AWTMQGELVE (64 aa)).

Belongs to the methylthiotransferase family. MiaB subfamily. Monomer. It depends on [4Fe-4S] cluster as a cofactor.

The protein resides in the cytoplasm. The enzyme catalyses N(6)-dimethylallyladenosine(37) in tRNA + (sulfur carrier)-SH + AH2 + 2 S-adenosyl-L-methionine = 2-methylsulfanyl-N(6)-dimethylallyladenosine(37) in tRNA + (sulfur carrier)-H + 5'-deoxyadenosine + L-methionine + A + S-adenosyl-L-homocysteine + 2 H(+). Its function is as follows. Catalyzes the methylthiolation of N6-(dimethylallyl)adenosine (i(6)A), leading to the formation of 2-methylthio-N6-(dimethylallyl)adenosine (ms(2)i(6)A) at position 37 in tRNAs that read codons beginning with uridine. The polypeptide is tRNA-2-methylthio-N(6)-dimethylallyladenosine synthase (Thermoanaerobacter sp. (strain X514)).